Consider the following 557-residue polypeptide: Dihydroxy-acid dehydratase (557 aa).

Asp78 is a Mg(2+) binding site. Residue Cys119 participates in [2Fe-2S] cluster binding. Mg(2+) is bound by residues Asp120 and Lys121. Lys121 carries the N6-carboxylysine modification. Position 192 (Cys192) interacts with [2Fe-2S] cluster. Residue Glu442 participates in Mg(2+) binding. Ser468 serves as the catalytic Proton acceptor.

This sequence belongs to the IlvD/Edd family. In terms of assembly, homodimer. The cofactor is [2Fe-2S] cluster. Mg(2+) is required as a cofactor.

It carries out the reaction (2R)-2,3-dihydroxy-3-methylbutanoate = 3-methyl-2-oxobutanoate + H2O. The enzyme catalyses (2R,3R)-2,3-dihydroxy-3-methylpentanoate = (S)-3-methyl-2-oxopentanoate + H2O. Its pathway is amino-acid biosynthesis; L-isoleucine biosynthesis; L-isoleucine from 2-oxobutanoate: step 3/4. The protein operates within amino-acid biosynthesis; L-valine biosynthesis; L-valine from pyruvate: step 3/4. Functionally, functions in the biosynthesis of branched-chain amino acids. Catalyzes the dehydration of (2R,3R)-2,3-dihydroxy-3-methylpentanoate (2,3-dihydroxy-3-methylvalerate) into 2-oxo-3-methylpentanoate (2-oxo-3-methylvalerate) and of (2R)-2,3-dihydroxy-3-methylbutanoate (2,3-dihydroxyisovalerate) into 2-oxo-3-methylbutanoate (2-oxoisovalerate), the penultimate precursor to L-isoleucine and L-valine, respectively. The protein is Dihydroxy-acid dehydratase of Bacillus cereus (strain Q1).